The primary structure comprises 385 residues: Queuine tRNA-ribosyltransferase (385 aa).

Residue D92 is the Proton acceptor of the active site. Substrate-binding positions include 92–96, D146, Q188, and G215; that span reads DSGGF. The tract at residues 246–252 is RNA binding; sequence GVGHPED. The active-site Nucleophile is D265. The RNA binding; important for wobble base 34 recognition stretch occupies residues 270-274; that stretch reads TRTGR. Positions 303, 305, 308, and 334 each coordinate Zn(2+).

The protein belongs to the queuine tRNA-ribosyltransferase family. Homodimer. Within each dimer, one monomer is responsible for RNA recognition and catalysis, while the other monomer binds to the replacement base PreQ1. It depends on Zn(2+) as a cofactor.

The catalysed reaction is 7-aminomethyl-7-carbaguanine + guanosine(34) in tRNA = 7-aminomethyl-7-carbaguanosine(34) in tRNA + guanine. Its pathway is tRNA modification; tRNA-queuosine biosynthesis. In terms of biological role, catalyzes the base-exchange of a guanine (G) residue with the queuine precursor 7-aminomethyl-7-deazaguanine (PreQ1) at position 34 (anticodon wobble position) in tRNAs with GU(N) anticodons (tRNA-Asp, -Asn, -His and -Tyr). Catalysis occurs through a double-displacement mechanism. The nucleophile active site attacks the C1' of nucleotide 34 to detach the guanine base from the RNA, forming a covalent enzyme-RNA intermediate. The proton acceptor active site deprotonates the incoming PreQ1, allowing a nucleophilic attack on the C1' of the ribose to form the product. After dissociation, two additional enzymatic reactions on the tRNA convert PreQ1 to queuine (Q), resulting in the hypermodified nucleoside queuosine (7-(((4,5-cis-dihydroxy-2-cyclopenten-1-yl)amino)methyl)-7-deazaguanosine). The polypeptide is Queuine tRNA-ribosyltransferase (Thermus thermophilus (strain ATCC 27634 / DSM 579 / HB8)).